We begin with the raw amino-acid sequence, 483 residues long: GTPase Der (483 aa).

EngA-type G domains lie at 3–167 (FTLA…GEER) and 212–387 (LRIA…EIWN). GTP contacts are provided by residues 9–16 (GRPNVGKS), 56–60 (DTAGL), 119–122 (NKAE), 218–225 (GRPNAGKS), 265–269 (DTAGM), and 330–333 (NKWD). Positions 388–472 (RRISTGRLNR…PIRLSLRTSD (85 aa)) constitute a KH-like domain.

Belongs to the TRAFAC class TrmE-Era-EngA-EngB-Septin-like GTPase superfamily. EngA (Der) GTPase family. In terms of assembly, associates with the 50S ribosomal subunit.

Functionally, GTPase that plays an essential role in the late steps of ribosome biogenesis. The sequence is that of GTPase Der from Brucella abortus (strain 2308).